The following is a 411-amino-acid chain: D-galactonate dehydratase family member SBI_01856 (411 aa).

Asparagine 45 and histidine 130 together coordinate substrate. Tyrosine 167 acts as the Proton donor/acceptor in catalysis. Aspartate 219 lines the Mg(2+) pocket. Catalysis depends on histidine 221, which acts as the Proton donor/acceptor. Mg(2+)-binding residues include glutamate 245 and glutamate 271. The substrate site is built by glutamate 271, arginine 292, histidine 321, aspartate 325, and glutamate 348.

It belongs to the mandelate racemase/muconate lactonizing enzyme family. GalD subfamily. Mg(2+) serves as cofactor.

It catalyses the reaction D-gluconate = 2-dehydro-3-deoxy-D-gluconate + H2O. Functionally, has low D-gluconate dehydratase activity (in vitro), suggesting that it has no significant role in D-gluconate degradation in vivo. Has no detectable activity with a panel of 70 other acid sugars (in vitro). This Streptomyces bingchenggensis (strain BCW-1) protein is D-galactonate dehydratase family member SBI_01856.